Here is a 462-residue protein sequence, read N- to C-terminus: Trigger factor (462 aa).

The 86-residue stretch at 163–248 folds into the PPIase FKBP-type domain; the sequence is GDEVLFDFKG…LKEVRRVNSL (86 aa). The tract at residues 442–462 is disordered; that stretch reads SMQEKQTQEPAEEKVETKEEK. Residues 452–462 show a composition bias toward basic and acidic residues; the sequence is AEEKVETKEEK.

Belongs to the FKBP-type PPIase family. Tig subfamily.

It is found in the cytoplasm. It carries out the reaction [protein]-peptidylproline (omega=180) = [protein]-peptidylproline (omega=0). Its function is as follows. Involved in protein export. Acts as a chaperone by maintaining the newly synthesized protein in an open conformation. Functions as a peptidyl-prolyl cis-trans isomerase. In Mycoplasmopsis synoviae (strain 53) (Mycoplasma synoviae), this protein is Trigger factor.